We begin with the raw amino-acid sequence, 333 residues long: Probable siderophore transport system permease protein YfiZ (333 aa).

The N-terminal stretch at 1-31 (MICKKASSKWIVLVCLIFILLTAVCASVVYG) is a signal peptide. 8 helical membrane-spanning segments follow: residues 64 to 84 (ALVA…MQAL), 94 to 114 (IFGI…FLHI), 119 to 139 (ALVW…YAAG), 152 to 172 (TLAG…LLSV), 193 to 213 (LDLL…CFFL), 246 to 266 (VMLA…GIII), 280 to 300 (WVLP…DIGA), and 303 to 323 (IIMP…MPVF).

Belongs to the binding-protein-dependent transport system permease family. FecCD subfamily. The complex is composed of one ATP-binding protein (YusV), two transmembrane proteins (YfiZ and YfhA) and a solute-binding protein (YfiY).

Its subcellular location is the cell membrane. In terms of biological role, part of the ABC transporter complex YfiYZ/YfhA/YusV involved in import of the iron-hydroxamate siderophores schizokinen, arthrobactin and corprogen. The chain is Probable siderophore transport system permease protein YfiZ (yfiZ) from Bacillus subtilis (strain 168).